The primary structure comprises 623 residues: Putative disease resistance protein At5g47280 (623 aa).

NB-ARC domains are found at residues 2 to 51 (LFNL…VSQS) and 119 to 249 (VDPR…NMLV). ATP is bound at residue 16–23 (GMIGSGKT). LRR repeat units follow at residues 488–511 (SLNSISITNCPNIKELPKNISKLQ), 512–534 (ALQLLRLYACPELKSLPVEICEL), 536–558 (RLVYVDISHCLSLSSLPEKIGNV), and 560–581 (TLEKIDMRECSLSSIPSSAVSL).

It belongs to the disease resistance NB-LRR family.

Functionally, potential disease resistance protein. This Arabidopsis thaliana (Mouse-ear cress) protein is Putative disease resistance protein At5g47280.